We begin with the raw amino-acid sequence, 997 residues long: Protein HIR2 (997 aa).

WD repeat units follow at residues 10 to 48 (GISG…DTAF), 117 to 152 (VSQS…TRSA), 153 to 194 (NKKE…VVYH), 274 to 319 (VHSP…PLFA), and 323 to 362 (ISDS…LGKT). Positions 408–584 (ADNSSNILST…RKPKEDALGN (177 aa)) are disordered. A compositionally biased stretch (polar residues) spans 409-446 (DNSSNILSTDTNTNEKNLSTVNTTEPQTNSQSSSYNNK). Residues 464–480 (SDEKAKNLEARPIEAKS) are compositionally biased toward basic and acidic residues. The segment covering 491-501 (SKSSSVTTSDN) has biased composition (polar residues). The segment covering 518-538 (TEKKTKPDKKSIKSENGESKV) has biased composition (basic and acidic residues). Residues 539 to 567 (NKAQNTISPKESNTTDNKSTTPDFKNPSY) are compositionally biased toward polar residues. WD repeat units follow at residues 665-706 (LFQD…IIPP) and 708-745 (TIGV…LEFP).

The protein belongs to the WD repeat HIR1 family.

It is found in the nucleus. In terms of biological role, required for replication-independent chromatin assembly and for the periodic repression of histone gene transcription during the cell cycle. This Candida glabrata (strain ATCC 2001 / BCRC 20586 / JCM 3761 / NBRC 0622 / NRRL Y-65 / CBS 138) (Yeast) protein is Protein HIR2 (HIR2).